Reading from the N-terminus, the 350-residue chain is tRNA uridine(34) hydroxylase (350 aa).

A Rhodanese domain is found at 146–240 (DDPDALFIDM…YARKAREQGL (95 aa)). The active-site Cysteine persulfide intermediate is cysteine 200.

This sequence belongs to the TrhO family.

It carries out the reaction uridine(34) in tRNA + AH2 + O2 = 5-hydroxyuridine(34) in tRNA + A + H2O. Its function is as follows. Catalyzes oxygen-dependent 5-hydroxyuridine (ho5U) modification at position 34 in tRNAs, the first step in 5-carboxymethoxyuridine (cmo5U) biosynthesis. May be part of an alternate pathway, which is able to bypass cmo5U biogenesis in a subset of tRNAs under aerobic conditions. In Escherichia coli (strain K12), this protein is tRNA uridine(34) hydroxylase.